The chain runs to 99 residues: Defensin-like protein 2 (99 aa).

A signal peptide spans 1 to 30; it reads MAMAKKSVSSFTLIFILVLVIFEVPEIKAQ. 4 disulfide bridges follow: cysteine 34-cysteine 86, cysteine 47-cysteine 71, cysteine 56-cysteine 81, and cysteine 60-cysteine 83. A propeptide spanning residues 94–99 is cleaved from the precursor; sequence ILRGGI.

It belongs to the DEFL family. Protease inhibitor I18 (RTI/MTI-2) subfamily.

Its subcellular location is the secreted. Functionally, inhibits bovine beta-trypsin and alpha-chymotrypsin on a 1:1 molar basis. This is Defensin-like protein 2 from Sinapis alba (White mustard).